Consider the following 101-residue polypeptide: Small ribosomal subunit protein bS18c (101 aa).

The protein belongs to the bacterial ribosomal protein bS18 family. Part of the 30S ribosomal subunit.

The protein resides in the plastid. Its subcellular location is the chloroplast. The chain is Small ribosomal subunit protein bS18c from Coffea arabica (Arabian coffee).